Consider the following 266-residue polypeptide: MFPELNNLLSITPDRTEQGKLTLLCDAKTDGSFLVHHFLSFYLKANCKVCFVALVQSFSHYNIVGQKLGVSLTAARERGQLVFLEGLKSSVEVLFHSQEEPHPLQFLREAGAGNLQSLYTFIQDTLKPADSGESPWKCPVLLVDNLSVLLSLGVGAVAVLDFMQYCRATVCCELKGNVVALVHDTEGAEDEENNILLNGLSHQSHLILRTQGLATGFCKDVHGQLSILWRRSSQPTAQRARSLTYQYKIQDKNVSFFAKGMSRAVL.

It belongs to the ELP6 family. Component of the elongator complex which consists of ELP1, ELP2, ELP3, ELP4, ELP5 and ELP6.

It is found in the cytoplasm. Its subcellular location is the nucleus. Its pathway is tRNA modification; 5-methoxycarbonylmethyl-2-thiouridine-tRNA biosynthesis. Component of the elongator complex which is required for multiple tRNA modifications, including mcm5U (5-methoxycarbonylmethyl uridine), mcm5s2U (5-methoxycarbonylmethyl-2-thiouridine), and ncm5U (5-carbamoylmethyl uridine). The elongator complex catalyzes formation of carboxymethyluridine in the wobble base at position 34 in tRNAs. Involved in cell migration. This Rattus norvegicus (Rat) protein is Elongator complex protein 6 (Elp6).